A 66-amino-acid polypeptide reads, in one-letter code: Large ribosomal subunit protein bL33c (66 aa).

Belongs to the bacterial ribosomal protein bL33 family.

The protein resides in the plastid. It localises to the chloroplast. This is Large ribosomal subunit protein bL33c from Cucumis sativus (Cucumber).